Consider the following 294-residue polypeptide: ATP synthase gamma chain (294 aa).

It belongs to the ATPase gamma chain family. In terms of assembly, F-type ATPases have 2 components, CF(1) - the catalytic core - and CF(0) - the membrane proton channel. CF(1) has five subunits: alpha(3), beta(3), gamma(1), delta(1), epsilon(1). CF(0) has three main subunits: a, b and c.

Its subcellular location is the cell inner membrane. In terms of biological role, produces ATP from ADP in the presence of a proton gradient across the membrane. The gamma chain is believed to be important in regulating ATPase activity and the flow of protons through the CF(0) complex. The chain is ATP synthase gamma chain from Campylobacter jejuni subsp. jejuni serotype O:6 (strain 81116 / NCTC 11828).